The sequence spans 289 residues: NAD kinase (289 aa).

Catalysis depends on Asp82, which acts as the Proton acceptor. NAD(+) is bound by residues 82–83 (DG), Arg87, 150–151 (NE), Lys161, Arg178, Asp180, 191–196 (TAYAMS), Ala215, and Gln250.

It belongs to the NAD kinase family. Requires a divalent metal cation as cofactor.

Its subcellular location is the cytoplasm. It carries out the reaction NAD(+) + ATP = ADP + NADP(+) + H(+). Its function is as follows. Involved in the regulation of the intracellular balance of NAD and NADP, and is a key enzyme in the biosynthesis of NADP. Catalyzes specifically the phosphorylation on 2'-hydroxyl of the adenosine moiety of NAD to yield NADP. This Methanosarcina mazei (strain ATCC BAA-159 / DSM 3647 / Goe1 / Go1 / JCM 11833 / OCM 88) (Methanosarcina frisia) protein is NAD kinase.